A 73-amino-acid chain; its full sequence is Sec-independent protein translocase protein TatA (73 aa).

Residues 1 to 21 form a helical membrane-spanning segment; the sequence is MGSFSIWHWLIVLVIVMLVFG. Positions 44–73 are disordered; that stretch reads KSAEDPNEQIPQSTTTAEKTVDVQAKDINK. A compositionally biased stretch (polar residues) spans 52–61; it reads QIPQSTTTAE. A compositionally biased stretch (basic and acidic residues) spans 62 to 73; sequence KTVDVQAKDINK.

It belongs to the TatA/E family. The Tat system comprises two distinct complexes: a TatABC complex, containing multiple copies of TatA, TatB and TatC subunits, and a separate TatA complex, containing only TatA subunits. Substrates initially bind to the TatABC complex, which probably triggers association of the separate TatA complex to form the active translocon.

Its subcellular location is the cell inner membrane. In terms of biological role, part of the twin-arginine translocation (Tat) system that transports large folded proteins containing a characteristic twin-arginine motif in their signal peptide across membranes. TatA could form the protein-conducting channel of the Tat system. The polypeptide is Sec-independent protein translocase protein TatA (Polynucleobacter asymbioticus (strain DSM 18221 / CIP 109841 / QLW-P1DMWA-1) (Polynucleobacter necessarius subsp. asymbioticus)).